Here is a 141-residue protein sequence, read N- to C-terminus: MAKKVEKLVKLQIPAGKATPAPPVGPALGQAGINIMGFTKEFNARTADQAGMIIPVVISVYEDKSFTFVTKTPPAAVLLKKAAGVEKGSGTPNKTKVATVTRAQVQEIAETKMPDLNAANVESAMRMIEGTARSMGFTVVD.

The protein belongs to the universal ribosomal protein uL11 family. As to quaternary structure, part of the ribosomal stalk of the 50S ribosomal subunit. Interacts with L10 and the large rRNA to form the base of the stalk. L10 forms an elongated spine to which L12 dimers bind in a sequential fashion forming a multimeric L10(L12)X complex. In terms of processing, one or more lysine residues are methylated.

Functionally, forms part of the ribosomal stalk which helps the ribosome interact with GTP-bound translation factors. The polypeptide is Large ribosomal subunit protein uL11 (Streptococcus pneumoniae serotype 2 (strain D39 / NCTC 7466)).